The sequence spans 92 residues: Small ribosomal subunit protein uS19 (92 aa).

The protein belongs to the universal ribosomal protein uS19 family.

Its function is as follows. Protein S19 forms a complex with S13 that binds strongly to the 16S ribosomal RNA. In Francisella tularensis subsp. tularensis (strain FSC 198), this protein is Small ribosomal subunit protein uS19.